A 229-amino-acid chain; its full sequence is Heptaprenylglyceryl phosphate synthase (229 aa).

Positions 13 and 39 each coordinate Mg(2+).

It belongs to the GGGP/HepGP synthase family. As to quaternary structure, homodimer. The cofactor is Mg(2+).

The enzyme catalyses sn-glycerol 1-phosphate + all-trans-heptaprenyl diphosphate = 3-heptaprenyl-sn-glycero-1-phosphate + diphosphate. It participates in membrane lipid metabolism; glycerophospholipid metabolism. Functionally, prenyltransferase that catalyzes in vivo the transfer of the heptaprenyl moiety of heptaprenyl pyrophosphate (HepPP; 35 carbon atoms) to the C3 hydroxyl of sn-glycerol-1-phosphate (G1P), producing heptaprenylglyceryl phosphate (HepGP). This reaction is an ether-bond-formation step in the biosynthesis of archaea-type G1P-based membrane lipids found in Bacillales. The protein is Heptaprenylglyceryl phosphate synthase of Lysinibacillus sphaericus (strain C3-41).